The sequence spans 563 residues: Mitochondrial distribution and morphology protein 34 (563 aa).

An SMP-LTD domain is found at 1–195 (MAFNFNWSPL…LPAIIHRLSL (195 aa)). Disordered regions lie at residues 298-460 (ERGD…QIPT) and 535-563 (RHDK…PKAL). Composition is skewed to polar residues over residues 303–332 (AGTT…FSNR) and 346–357 (SLVNMNSATTGL). Over residues 365–383 (SRSHTTRKKKNRVVNLRKS) the composition is skewed to basic residues. Polar residues-rich tracts occupy residues 386-402 (TDNV…SITA) and 444-460 (PSRS…QIPT).

This sequence belongs to the MDM34 family. Component of the ER-mitochondria encounter structure (ERMES) or MDM complex, composed of mmm1, mdm10, mdm12 and mdm34.

It is found in the mitochondrion outer membrane. Its function is as follows. Component of the ERMES/MDM complex, which serves as a molecular tether to connect the endoplasmic reticulum (ER) and mitochondria. Components of this complex are involved in the control of mitochondrial shape and protein biogenesis, and function in nonvesicular lipid trafficking between the ER and mitochondria. Mdm34 is required for the interaction of the ER-resident membrane protein mmm1 and the outer mitochondrial membrane-resident beta-barrel protein mdm10. The protein is Mitochondrial distribution and morphology protein 34 of Sclerotinia sclerotiorum (strain ATCC 18683 / 1980 / Ss-1) (White mold).